The primary structure comprises 288 residues: Cytochrome b-c1 complex catalytic subunit, mitochondrial (288 aa).

A helical transmembrane segment spans residues Ser12 to Tyr34. The Cytochrome c domain maps to Ala69–Pro222. The heme c site is built by Cys82, Cys85, and His86. Positions Glu111–Asp121 are enriched in acidic residues. The disordered stretch occupies residues Glu111–Gly138. A helical membrane pass occupies residues Trp250 to Val268.

It belongs to the cytochrome c family. Component of the ubiquinol-cytochrome c oxidoreductase (cytochrome b-c1 complex, complex III, CIII), a multisubunit enzyme composed of 10 subunits. The complex is composed of 3 respiratory subunits cytochrome b (COB), cytochrome c1 (CYT1) and Rieske protein (RIP1), 2 core protein subunits COR1 and QCR2, and 5 low-molecular weight protein subunits QCR6, QCR7, QCR8, QCR9 and QCR10. The complex exists as an obligatory dimer and forms supercomplexes (SCs) in the inner mitochondrial membrane with a monomer or a dimer of cytochrome c oxidase (complex IV, CIV), resulting in 2 different assemblies (supercomplexes III(2)IV and III(2)IV(2)). It depends on heme c as a cofactor.

Its subcellular location is the mitochondrion inner membrane. The enzyme catalyses a quinol + 2 Fe(III)-[cytochrome c](out) = a quinone + 2 Fe(II)-[cytochrome c](out) + 2 H(+)(out). In terms of biological role, component of the ubiquinol-cytochrome c oxidoreductase, a multisubunit transmembrane complex that is part of the mitochondrial electron transport chain which drives oxidative phosphorylation. The complex plays an important role in the uptake of multiple carbon sources present in different host niches. The sequence is that of Cytochrome b-c1 complex catalytic subunit, mitochondrial from Candida albicans (strain SC5314 / ATCC MYA-2876) (Yeast).